We begin with the raw amino-acid sequence, 268 residues long: Protein MSS18 (268 aa).

To baculovirus occlusion-derived virus envelope protein E27 (ODV-E27).

The protein localises to the mitochondrion. Involved in splicing of intron aI5-beta of the mitochondrial COX1 transcript. The protein is Protein MSS18 (MSS18) of Saccharomyces cerevisiae (strain ATCC 204508 / S288c) (Baker's yeast).